Consider the following 73-residue polypeptide: Putative antitoxin M1627_0365 (73 aa).

The protein belongs to the UPF0330 family.

Functionally, possibly the antitoxin component of a type II toxin-antitoxin (TA) system. This is Putative antitoxin M1627_0365 from Saccharolobus islandicus (strain M.16.27) (Sulfolobus islandicus).